Reading from the N-terminus, the 126-residue chain is Large ribosomal subunit protein bL12 (126 aa).

Belongs to the bacterial ribosomal protein bL12 family. In terms of assembly, homodimer. Part of the ribosomal stalk of the 50S ribosomal subunit. Forms a multimeric L10(L12)X complex, where L10 forms an elongated spine to which 2 to 4 L12 dimers bind in a sequential fashion. Binds GTP-bound translation factors.

Functionally, forms part of the ribosomal stalk which helps the ribosome interact with GTP-bound translation factors. Is thus essential for accurate translation. This chain is Large ribosomal subunit protein bL12, found in Coxiella burnetii (strain CbuK_Q154) (Coxiella burnetii (strain Q154)).